Reading from the N-terminus, the 229-residue chain is Wtf element wtf14 (229 aa).

Positions 1–26 are enriched in basic and acidic residues; sequence MENNHHLAKDSLDELNPKRGKGEHET. The segment at 1–27 is disordered; the sequence is MENNHHLAKDSLDELNPKRGKGEHETQ. 4 helical membrane passes run 71–91, 100–120, 151–171, and 188–208; these read IPAV…YLVF, VLFG…LLAT, LYAI…LMFF, and VIGV…PGLF.

Belongs to the WTF family.

It localises to the endoplasmic reticulum membrane. May act in meiotic drive. This Schizosaccharomyces kambucha (Fission yeast) protein is Wtf element wtf14.